The primary structure comprises 81 residues: MAFVSGFTGMPVTARVSKAVCRTRMALEGGKSSGGGEATRDPEPTAVDPNDPKGKQQAIHVAPSFADYLKAQADKKKAEGK.

Residues 1–25 (MAFVSGFTGMPVTARVSKAVCRTRM) constitute a chloroplast transit peptide. A disordered region spans residues 27-57 (LEGGKSSGGGEATRDPEPTAVDPNDPKGKQQ).

It is found in the plastid. The protein resides in the chloroplast. In Pyropia yezoensis (Susabi-nori), this protein is Protein PYP1.